The following is a 171-amino-acid chain: Ribosome maturation factor RimP (171 aa).

The protein belongs to the RimP family.

The protein resides in the cytoplasm. Required for maturation of 30S ribosomal subunits. The protein is Ribosome maturation factor RimP of Anaeromyxobacter dehalogenans (strain 2CP-1 / ATCC BAA-258).